The sequence spans 162 residues: Cytochrome c-type biogenesis protein CcmE (162 aa).

At 1-8 (MNPRRKKR) the chain is on the cytoplasmic side. The chain crosses the membrane as a helical; Signal-anchor for type II membrane protein span at residues 9–29 (LALVVGLIGGVAAVASLLLYA). Over 30–162 (LNTNLNLFYT…YTETQKGGSR (133 aa)) the chain is Periplasmic. Residues histidine 131 and tyrosine 135 each contribute to the heme site.

This sequence belongs to the CcmE/CycJ family.

It is found in the cell inner membrane. In terms of biological role, heme chaperone required for the biogenesis of c-type cytochromes. Transiently binds heme delivered by CcmC and transfers the heme to apo-cytochromes in a process facilitated by CcmF and CcmH. The protein is Cytochrome c-type biogenesis protein CcmE of Shewanella amazonensis (strain ATCC BAA-1098 / SB2B).